Consider the following 178-residue polypeptide: ATP-dependent protease subunit HslV (178 aa).

The active site involves Thr7. The Na(+) site is built by Gly162, Cys165, and Thr168.

This sequence belongs to the peptidase T1B family. HslV subfamily. A double ring-shaped homohexamer of HslV is capped on each side by a ring-shaped HslU homohexamer. The assembly of the HslU/HslV complex is dependent on binding of ATP.

Its subcellular location is the cytoplasm. It carries out the reaction ATP-dependent cleavage of peptide bonds with broad specificity.. Allosterically activated by HslU binding. Protease subunit of a proteasome-like degradation complex believed to be a general protein degrading machinery. This is ATP-dependent protease subunit HslV from Leptothrix cholodnii (strain ATCC 51168 / LMG 8142 / SP-6) (Leptothrix discophora (strain SP-6)).